The chain runs to 307 residues: Oxygen-dependent coproporphyrinogen-III oxidase (307 aa).

Residue S99 participates in substrate binding. A divalent metal cation contacts are provided by H103 and H113. H113 serves as the catalytic Proton donor. N115 to R117 is a binding site for substrate. A divalent metal cation contacts are provided by H152 and H182. The segment at Y247–R282 is important for dimerization. G265 to R267 provides a ligand contact to substrate.

Belongs to the aerobic coproporphyrinogen-III oxidase family. In terms of assembly, homodimer. The cofactor is a divalent metal cation.

It localises to the cytoplasm. The catalysed reaction is coproporphyrinogen III + O2 + 2 H(+) = protoporphyrinogen IX + 2 CO2 + 2 H2O. It functions in the pathway porphyrin-containing compound metabolism; protoporphyrin-IX biosynthesis; protoporphyrinogen-IX from coproporphyrinogen-III (O2 route): step 1/1. In terms of biological role, involved in the heme biosynthesis. Catalyzes the aerobic oxidative decarboxylation of propionate groups of rings A and B of coproporphyrinogen-III to yield the vinyl groups in protoporphyrinogen-IX. The sequence is that of Oxygen-dependent coproporphyrinogen-III oxidase from Burkholderia pseudomallei (strain 1106a).